The sequence spans 556 residues: Cell wall integrity and stress response component 3 (556 aa).

A signal peptide spans 1–38; it reads MERVWFAKLTNKGTIKIGYISFILLSLLCQSLIGLVNA. Positions 39–132 constitute a WSC domain; it reads DFNYEGCYSA…SSYMNVYVNA (94 aa). Topologically, residues 39–384 are extracellular; it reads DFNYEGCYSA…QRLSGGAIAG (346 aa). Asn-84 carries N-linked (GlcNAc...) asparagine glycosylation. Low complexity-rich tracts occupy residues 142-169 and 184-257; these read SSSK…SSTT and TTVS…STTS. 2 disordered regions span residues 142–257 and 269–312; these read SSSK…STTS and TLSS…PSTS. N-linked (GlcNAc...) asparagine glycosylation is found at Asn-367 and Asn-370. Residues 385-405 form a helical membrane-spanning segment; that stretch reads IVIGVVFGVIFIILILLFLIW. Residues 406 to 556 are Cytoplasmic-facing; it reads RRRKSHDQLD…LSSTVSHNRA (151 aa). 2 disordered regions span residues 425-444 and 534-556; these read YSFG…SGTT and LQVV…HNRA. The span at 546–556 shows a compositional bias: polar residues; sequence ELSSTVSHNRA.

The protein resides in the membrane. The chain is Cell wall integrity and stress response component 3 (WSC3) from Saccharomyces cerevisiae (strain ATCC 204508 / S288c) (Baker's yeast).